Here is a 141-residue protein sequence, read N- to C-terminus: Cystatin (141 aa).

An N-terminal signal peptide occupies residues 1–26 (MVRSQLPVAAPLRLLCALLLLPSATM). Residues 29–129 (GGLSPRSVTD…CHFQVWSRPW (101 aa)) enclose the Cystatin domain. Residues 73–77 (QVVSG) carry the Secondary area of contact motif. Cystine bridges form between Cys-91–Cys-107 and Cys-120–Cys-140.

Belongs to the cystatin family. In terms of tissue distribution, expressed at a low level by the venom gland (at protein level).

The protein localises to the secreted. Its function is as follows. Inhibits various C1 cysteine proteases including cathepsin L, papain and cathepsin B. This protein has no toxic activity and its function in the venom is unknown. It may play a role as a housekeeping or regulatory protein. This chain is Cystatin, found in Micropechis ikaheca (New Guinean small-eyed snake).